A 49-amino-acid chain; its full sequence is Defensin Tk-AMP-D1 (49 aa).

Disulfide bonds link Cys-3–Cys-49, Cys-14–Cys-34, Cys-20–Cys-43, and Cys-24–Cys-45.

Its function is as follows. Has weak antifungal activity against F.graminearum and F.verticillioides below 30 ug/ml, but not against A.consortiale B.cinerea, H.sativum, F.culmorum, C.graminicola and D.maydis. The protein is Defensin Tk-AMP-D1 of Triticum kiharae (Wheat).